Consider the following 163-residue polypeptide: Staphylokinase (163 aa).

The N-terminal stretch at 1-27 is a signal peptide; the sequence is MLKRGLLFLTVLLLLFSFSSITNEVSA.

Belongs to the staphylokinase family.

The protein localises to the secreted. Functionally, potent plasminogen activator that converts plasminogen into plasmin. It forms a 1:1 complex with plasmin, which in turn activates other plasminogen molecules. The sequence is that of Staphylokinase (sak) from Staphylococcus aureus (strain MRSA252).